Here is a 302-residue protein sequence, read N- to C-terminus: Acetylglutamate kinase (302 aa).

Residues 55 to 56 (GG), Arg-77, and Asn-176 each bind substrate.

Belongs to the acetylglutamate kinase family. ArgB subfamily.

The protein resides in the cytoplasm. It catalyses the reaction N-acetyl-L-glutamate + ATP = N-acetyl-L-glutamyl 5-phosphate + ADP. The protein operates within amino-acid biosynthesis; L-arginine biosynthesis; N(2)-acetyl-L-ornithine from L-glutamate: step 2/4. Catalyzes the ATP-dependent phosphorylation of N-acetyl-L-glutamate. The protein is Acetylglutamate kinase of Corynebacterium efficiens (strain DSM 44549 / YS-314 / AJ 12310 / JCM 11189 / NBRC 100395).